An 82-amino-acid polypeptide reads, in one-letter code: Large ribosomal subunit protein bL27 (82 aa).

The disordered stretch occupies residues methionine 1–tyrosine 20. Positions alanine 7–glutamine 19 are enriched in polar residues.

Belongs to the bacterial ribosomal protein bL27 family.

This is Large ribosomal subunit protein bL27 from Bifidobacterium longum (strain NCC 2705).